Here is a 304-residue protein sequence, read N- to C-terminus: Transcription factor BEE 2 (304 aa).

Residues 74–132 form a disordered region; the sequence is FHMEPVKNNGHSRAITLQNKRKPEGKTEKREKKKIKAEDETEPSMKGKSNMSNTETSSE. A compositionally biased stretch (polar residues) spans 82–91; that stretch reads NGHSRAITLQ. Basic and acidic residues predominate over residues 94 to 103; the sequence is RKPEGKTEKR. Positions 120-132 are enriched in polar residues; sequence GKSNMSNTETSSE. The 51-residue stretch at 147–197 folds into the bHLH domain; that stretch reads EATDRHSLAERARREKISKKMKCLQDIVPGCNKVTGKAGMLDEIINYVQSL.

In terms of assembly, homodimer. As to expression, expressed in stems and flowers.

It localises to the nucleus. Its function is as follows. Positive regulator of brassinosteroid signaling. The protein is Transcription factor BEE 2 (BEE2) of Arabidopsis thaliana (Mouse-ear cress).